Here is a 474-residue protein sequence, read N- to C-terminus: MEARPPKGPGKQFTFDYENEVHKRDYFIKSPPPQLFFSGTSWKKRLFILSQSRGTGLSLSYYKDHQHRGSIEIDGSSTVEVGINCQEKMQSVQKMFKCHPDEVMSIRTANRDYFLIGHDREKIKDWVSFMTPYCQGVKATHQRAEEKLSLGDRRPVSDPSPFLGLCSIPEGIRLASPRASLPEHLIQKSLQRFRQAHLHQDHDFHSEPTQDTEEEYYLTPRSLEACLELENIAGPNDSGDSIESNSPDQGFKRAESNYVSMRSLRTCLLKESTSASADDNDGQAEFQTESELGPPHQDSGTGSDPCLSPPNSKAQTTDDQKGSASLTVVKLSILLNNIPDESQVETLNVFLSPRDAIDYLALVEAAGQICVARWEGPPRLGCLFYHGDHILAVNDLKPQSLEEVSLFLTRCIQKEKVKLSIGRIPNSEKLHASPCACSLRHQLAESVQRDLPELERTPKRSPAIKKSQKEAAGE.

Residues 20–135 form the PH domain; sequence EVHKRDYFIK…WVSFMTPYCQ (116 aa). Disordered regions lie at residues 232-251, 272-321, and 449-474; these read IAGP…DQGF, STSA…DDQK, and RDLP…AAGE. The segment covering 238-248 has biased composition (polar residues); sequence SGDSIESNSPD. The segment covering 449–458 has biased composition (basic and acidic residues); that stretch reads RDLPELERTP.

In Mus musculus (Mouse), this protein is Pleckstrin homology domain-containing family S member 1.